Reading from the N-terminus, the 215-residue chain is Probable Rab-related GTPase (215 aa).

Residue 20–27 coordinates GTP; the sequence is GSSGVGKS. Positions 42 to 50 match the Effector region motif; it reads VSPTIGAAF. Residues 69 to 73 and 127 to 130 contribute to the GTP site; these read DTAGQ and NKID. S-geranylgeranyl cysteine; by host attachment occurs at residues Cys211 and Cys212. Position 212 is a cysteine methyl ester; by host (Cys212). Residues 213 to 215 constitute a propeptide, removed in mature form; that stretch reads YIS.

Belongs to the small GTPase superfamily. Rab family.

Its subcellular location is the host cell membrane. May be involved in protein transport. The chain is Probable Rab-related GTPase from Acanthamoeba polyphaga mimivirus (APMV).